The sequence spans 465 residues: GDNF family receptor alpha-2 (465 aa).

An N-terminal signal peptide occupies residues 1 to 21; sequence MILANAFCIVLFVDETLRSLA. 14 cysteine pairs are disulfide-bonded: C40/C93, C47/C53, C63/C78, C95/C105, C159/C220, C166/C172, C183/C198, C193/C239, C222/C227, C249/C321, C256/C262, C273/C291, C283/C345, and C323/C333. Residues N355, N387, and N412 are each glycosylated (N-linked (GlcNAc...) asparagine). The GPI-anchor amidated serine moiety is linked to residue S445. The propeptide at 446–465 is removed in mature form; sequence RHRAARILPAVPIVLLKLLL.

Belongs to the GDNFR family. As to quaternary structure, interacts with NRTN ligand and RET: forms a 2:2:2 ternary complex composed of NRTN ligand, GFRA2 and RET receptor.

It localises to the cell membrane. Functionally, receptor for neurturin (NRTN), a growth factor that supports the survival of sympathetic neurons. NRTN-binding leads to autophosphorylation and activation of the RET receptor. This is GDNF family receptor alpha-2 (GFRA2) from Gallus gallus (Chicken).